The chain runs to 315 residues: ATP synthase gamma chain (315 aa).

It belongs to the ATPase gamma chain family. F-type ATPases have 2 components, CF(1) - the catalytic core - and CF(0) - the membrane proton channel. CF(1) has five subunits: alpha(3), beta(3), gamma(1), delta(1), epsilon(1). CF(0) has three main subunits: a, b and c.

The protein resides in the cellular thylakoid membrane. In terms of biological role, produces ATP from ADP in the presence of a proton gradient across the membrane. The gamma chain is believed to be important in regulating ATPase activity and the flow of protons through the CF(0) complex. This is ATP synthase gamma chain from Nostoc sp. (strain PCC 7120 / SAG 25.82 / UTEX 2576).